The primary structure comprises 463 residues: Elongation factor 1-alpha 2 (463 aa).

A N,N,N-trimethylglycine modification is found at glycine 2. Residues 5–242 (KTHINIVVIG…DTILPPTRPT (238 aa)) form the tr-type G domain. The tract at residues 14–21 (GHVDSGKS) is G1. Residues aspartate 17, serine 18, glycine 19, lysine 20, serine 21, and threonine 22 each contribute to the GTP site. A Mg(2+)-binding site is contributed by aspartate 17. N6,N6,N6-trimethyllysine; alternate is present on lysine 36. N6,N6-dimethyllysine; alternate is present on lysine 36. Position 36 is an N6-methyllysine; alternate (lysine 36). Lysine 55 is subject to N6,N6,N6-trimethyllysine. Residue lysine 55 is modified to N6,N6-dimethyllysine. The segment at 70–74 (GITID) is G2. Lysine 79 carries the N6,N6,N6-trimethyllysine modification. Positions 91 to 94 (DAPG) are G3. GTP contacts are provided by asparagine 153, lysine 154, and aspartate 156. The segment at 153–156 (NKMD) is G4. A Phosphoserine modification is found at serine 163. N6,N6-dimethyllysine; alternate is present on lysine 165. Lysine 165 is subject to N6-methyllysine; alternate. Lysine 165 is modified (N6,N6,N6-trimethyllysine; alternate; by EEF1AKMT3). Lysine 179 bears the N6-acetyllysine mark. 3 residues coordinate GTP: serine 194, glycine 195, and tryptophan 196. The segment at 194–196 (SGW) is G5. Serine 224 bears the Phosphoserine mark. The residue at position 239 (threonine 239) is a Phosphothreonine. 5-glutamyl glycerylphosphorylethanolamine occurs at positions 301 and 374. N6-acetyllysine is present on lysine 439. The segment at 444–463 (KSGGAGKVTKSAQKAQKAGK) is disordered.

Belongs to the TRAFAC class translation factor GTPase superfamily. Classic translation factor GTPase family. EF-Tu/EF-1A subfamily. As to quaternary structure, homodimer; arranged in a 'head to tail' dimer configuration. In terms of processing, trimethylated at Lys-165 by EEF1AKMT3. Mono-, di-, and trimethylated at Lys-36 by EEF1AKMT4; trimethylated form is predominant. Methylation by EEF1AKMT4 contributes to the fine-tuning of translation rates for a subset of tRNAs. Trimethylated at the N-terminus and dimethylated at Lys-55 by METTL13.

The protein resides in the endoplasmic reticulum membrane. It carries out the reaction GTP + H2O = GDP + phosphate + H(+). Translation elongation factor that catalyzes the GTP-dependent binding of aminoacyl-tRNA (aa-tRNA) to the A-site of ribosomes during the elongation phase of protein synthesis. Base pairing between the mRNA codon and the aa-tRNA anticodon promotes GTP hydrolysis, releasing the aa-tRNA from EEF1A1 and allowing its accommodation into the ribosome. The growing protein chain is subsequently transferred from the P-site peptidyl tRNA to the A-site aa-tRNA, extending it by one amino acid through ribosome-catalyzed peptide bond formation. This chain is Elongation factor 1-alpha 2 (EEF1A2), found in Bos taurus (Bovine).